The primary structure comprises 554 residues: Capsid vertex component 2 (554 aa).

The tract at residues 1-46 (MTQLSLFYQFPIQPIFEGHVRNTLICTEEDMQQLQNLGIRKLRKEK) is interaction with major capsid protein/MCP.

The protein belongs to the herpesviridae CVC2 protein family. In terms of assembly, heterodimerizes with CVC1. Interacts with major capsid protein/MCP and triplex capsid protein 1/TRX1 at the pentamer vertices. Interacts with the large tegument protein/LTP.

The protein localises to the virion. Its subcellular location is the host nucleus. Capsid vertex-specific component that plays a role during viral DNA encapsidation, assuring correct genome cleavage and presumably stabilizing capsids that contain full-length viral genomes. Participates in the interaction between the capsid and the tegument through interaction with the large tegument protein/LTP. The polypeptide is Capsid vertex component 2 (Human herpesvirus 7 (strain JI) (HHV-7)).